Consider the following 1793-residue polypeptide: Transposon Ty1-H Gag-Pol polyprotein (1793 aa).

Composition is skewed to polar residues over residues 1–10 (MESQQLSNYP), 48–60 (TKAN…TPAS), and 127–152 (QSQF…GNTF). Disordered stretches follow at residues 1–84 (MESQ…QNGP), 126–174 (PQSQ…PPPM), and 390–459 (GSRN…SKST). The span at 153-165 (TDSSSADSDMTST) shows a compositional bias: low complexity. Residues 337 to 439 (NNGIHINNKV…NSKSKTARAH (103 aa)) form an RNA-binding region. The segment covering 440–456 (NVSTSNNSPSTDNDSIS) has biased composition (low complexity). Asp-499 serves as the catalytic For protease activity; shared with dimeric partner. Residues 621–678 (NVHTSESTRKYPYPFIHRMLAHANAQTIRYSLKNNTITYFNESDVDWSSAIDYQCPDC) are integrase-type zinc finger-like. Residues 698–873 (NSYEPFQYLH…AGLDISTLLP (176 aa)) form the Integrase catalytic domain. Mg(2+) contacts are provided by Asp-709 and Asp-774. Positions 996 to 1208 (AVSPTDSTPP…SSLGGIGDSN (213 aa)) are disordered. Positions 998 to 1007 (SPTDSTPPST) are enriched in low complexity. Residues 1043–1053 (STPQISDIEST) show a composition bias toward polar residues. Residues 1076–1091 (ESSHASKSKDFRHSDS) are compositionally biased toward basic and acidic residues. Composition is skewed to polar residues over residues 1092–1120 (YSDN…QTSE) and 1133–1144 (SIDTSSSESNSL). A Bipartite nuclear localization signal motif is present at residues 1216-1250 (KKRSLEDNETEIKVSRDTWNTKNMRSLEPPRSKKR). In terms of domain architecture, Reverse transcriptase Ty1/copia-type spans 1376–1514 (NNYYITQLDI…DILGLEIKYQ (139 aa)). Mg(2+) contacts are provided by Asp-1384, Asp-1465, Asp-1466, Asp-1648, Glu-1690, and Asp-1723. Residues 1648–1790 (DASYGNQPYY…IKTFKLLTNK (143 aa)) form the RNase H Ty1/copia-type domain.

As to quaternary structure, the capsid protein forms a homotrimer, from which the VLPs are assembled. The protease is a homodimer, whose active site consists of two apposed aspartic acid residues. In terms of processing, initially, virus-like particles (VLPs) are composed of the structural unprocessed proteins Gag and Gag-Pol, and also contain the host initiator methionine tRNA (tRNA(i)-Met) which serves as a primer for minus-strand DNA synthesis, and a dimer of genomic Ty RNA. Processing of the polyproteins occurs within the particle and proceeds by an ordered pathway, called maturation. First, the protease (PR) is released by autocatalytic cleavage of the Gag-Pol polyprotein yielding capsid protein p45 and a Pol-p154 precursor protein. This cleavage is a prerequisite for subsequent processing of Pol-p154 at the remaining sites to release the mature structural and catalytic proteins. Maturation takes place prior to the RT reaction and is required to produce transposition-competent VLPs.

It localises to the cytoplasm. The protein resides in the nucleus. It carries out the reaction DNA(n) + a 2'-deoxyribonucleoside 5'-triphosphate = DNA(n+1) + diphosphate. The catalysed reaction is Endonucleolytic cleavage to 5'-phosphomonoester.. Capsid protein (CA) is the structural component of the virus-like particle (VLP), forming the shell that encapsulates the retrotransposons dimeric RNA genome. The particles are assembled from trimer-clustered units and there are holes in the capsid shells that allow for the diffusion of macromolecules. CA also has nucleocapsid-like chaperone activity, promoting primer tRNA(i)-Met annealing to the multipartite primer-binding site (PBS), dimerization of Ty1 RNA and initiation of reverse transcription. Functionally, the aspartyl protease (PR) mediates the proteolytic cleavages of the Gag and Gag-Pol polyproteins after assembly of the VLP. Its function is as follows. Reverse transcriptase/ribonuclease H (RT) is a multifunctional enzyme that catalyzes the conversion of the retro-elements RNA genome into dsDNA within the VLP. The enzyme displays a DNA polymerase activity that can copy either DNA or RNA templates, and a ribonuclease H (RNase H) activity that cleaves the RNA strand of RNA-DNA heteroduplexes during plus-strand synthesis and hydrolyzes RNA primers. The conversion leads to a linear dsDNA copy of the retrotransposon that includes long terminal repeats (LTRs) at both ends. In terms of biological role, integrase (IN) targets the VLP to the nucleus, where a subparticle preintegration complex (PIC) containing at least integrase and the newly synthesized dsDNA copy of the retrotransposon must transit the nuclear membrane. Once in the nucleus, integrase performs the integration of the dsDNA into the host genome. The sequence is that of Transposon Ty1-H Gag-Pol polyprotein (TY1B-H) from Saccharomyces cerevisiae (strain ATCC 204508 / S288c) (Baker's yeast).